The following is an 873-amino-acid chain: Leucine--tRNA ligase (873 aa).

Positions Pro42–His52 match the 'HIGH' region motif. The short motif at Lys628–Ser632 is the 'KMSKS' region element. Residue Lys631 participates in ATP binding.

Belongs to the class-I aminoacyl-tRNA synthetase family.

The protein resides in the cytoplasm. It carries out the reaction tRNA(Leu) + L-leucine + ATP = L-leucyl-tRNA(Leu) + AMP + diphosphate. This is Leucine--tRNA ligase from Azoarcus sp. (strain BH72).